The sequence spans 88 residues: Exodeoxyribonuclease 7 small subunit (88 aa).

The tract at residues 69–88 (DPMRPDDGEPFDPSIVSTSQ) is disordered.

It belongs to the XseB family. In terms of assembly, heterooligomer composed of large and small subunits.

The protein localises to the cytoplasm. The enzyme catalyses Exonucleolytic cleavage in either 5'- to 3'- or 3'- to 5'-direction to yield nucleoside 5'-phosphates.. Bidirectionally degrades single-stranded DNA into large acid-insoluble oligonucleotides, which are then degraded further into small acid-soluble oligonucleotides. The chain is Exodeoxyribonuclease 7 small subunit from Xylella fastidiosa (strain M12).